Consider the following 172-residue polypeptide: Small ribosomal subunit protein uS5 (172 aa).

Positions 17-80 (LREKMIAVNR…EEARRNMVKV (64 aa)) constitute an S5 DRBM domain.

This sequence belongs to the universal ribosomal protein uS5 family. In terms of assembly, part of the 30S ribosomal subunit. Contacts proteins S4 and S8.

Its function is as follows. With S4 and S12 plays an important role in translational accuracy. Located at the back of the 30S subunit body where it stabilizes the conformation of the head with respect to the body. This Verminephrobacter eiseniae (strain EF01-2) protein is Small ribosomal subunit protein uS5.